Consider the following 502-residue polypeptide: Tryptophan decarboxylase TDC1 (502 aa).

The span at methionine 1–glutamine 18 shows a compositional bias: polar residues. Residues methionine 1 to proline 21 are disordered. Lysine 319 is subject to N6-(pyridoxal phosphate)lysine.

It belongs to the group II decarboxylase family. The cofactor is pyridoxal 5'-phosphate. In terms of tissue distribution, highly expressed in apex. Expressed in young stem and bark tissues. Expressed at low levels in leaves, fruits and seeds.

It carries out the reaction L-tryptophan + H(+) = tryptamine + CO2. Functionally, involved in the biosynthesis of tryptamine. Supplies tryptamine for the indole moiety of camptothecin (CPT), an anti-cancer monoterpene alkaloid. Represents a key step in monoterpene indole alkaloid biosynthesis. Is specific for tryptophan, and inactive against tyrosine, phenylalanine and 3,4-dihydroxyphenylalanine (dopa). In Camptotheca acuminata (Happy tree), this protein is Tryptophan decarboxylase TDC1.